A 229-amino-acid polypeptide reads, in one-letter code: Enolase-phosphatase E1 (229 aa).

Belongs to the HAD-like hydrolase superfamily. MasA/MtnC family. As to quaternary structure, monomer. Mg(2+) serves as cofactor.

The enzyme catalyses 5-methylsulfanyl-2,3-dioxopentyl phosphate + H2O = 1,2-dihydroxy-5-(methylsulfanyl)pent-1-en-3-one + phosphate. It participates in amino-acid biosynthesis; L-methionine biosynthesis via salvage pathway; L-methionine from S-methyl-5-thio-alpha-D-ribose 1-phosphate: step 3/6. The protein operates within amino-acid biosynthesis; L-methionine biosynthesis via salvage pathway; L-methionine from S-methyl-5-thio-alpha-D-ribose 1-phosphate: step 4/6. Functionally, bifunctional enzyme that catalyzes the enolization of 2,3-diketo-5-methylthiopentyl-1-phosphate (DK-MTP-1-P) into the intermediate 2-hydroxy-3-keto-5-methylthiopentenyl-1-phosphate (HK-MTPenyl-1-P), which is then dephosphorylated to form the acireductone 1,2-dihydroxy-3-keto-5-methylthiopentene (DHK-MTPene). This is Enolase-phosphatase E1 from Enterobacter sp. (strain 638).